The chain runs to 356 residues: tRNA N6-adenosine threonylcarbamoyltransferase (356 aa).

The Fe cation site is built by H110 and H114. Substrate contacts are provided by residues 133 to 137 (LVSGG), D166, G179, and N276. D304 is a binding site for Fe cation.

This sequence belongs to the KAE1 / TsaD family. It depends on Fe(2+) as a cofactor.

It is found in the cytoplasm. The enzyme catalyses L-threonylcarbamoyladenylate + adenosine(37) in tRNA = N(6)-L-threonylcarbamoyladenosine(37) in tRNA + AMP + H(+). Functionally, required for the formation of a threonylcarbamoyl group on adenosine at position 37 (t(6)A37) in tRNAs that read codons beginning with adenine. Is involved in the transfer of the threonylcarbamoyl moiety of threonylcarbamoyl-AMP (TC-AMP) to the N6 group of A37, together with TsaE and TsaB. TsaD likely plays a direct catalytic role in this reaction. The sequence is that of tRNA N6-adenosine threonylcarbamoyltransferase from Teredinibacter turnerae (strain ATCC 39867 / T7901).